Reading from the N-terminus, the 428-residue chain is Histidine--tRNA ligase (428 aa).

The protein belongs to the class-II aminoacyl-tRNA synthetase family. Homodimer.

The protein resides in the cytoplasm. The enzyme catalyses tRNA(His) + L-histidine + ATP = L-histidyl-tRNA(His) + AMP + diphosphate + H(+). This Sorangium cellulosum (strain So ce56) (Polyangium cellulosum (strain So ce56)) protein is Histidine--tRNA ligase.